A 1481-amino-acid polypeptide reads, in one-letter code: Cystic fibrosis transmembrane conductance regulator (1481 aa).

Residues 1–77 (MQRSPLEKAS…KLINALRRCF (77 aa)) lie on the Cytoplasmic side of the membrane. Residues 78-98 (FWRFMFYGILLYLGEVTKAVQ) traverse the membrane as a helical segment. The region spanning 81–365 (FMFYGILLYL…WAVQTWYDSL (285 aa)) is the ABC transmembrane type-1 1 domain. Topologically, residues 99-122 (PLLLGRIIASYDPDNKEERSIAIY) are extracellular. Residues 123–146 (LGIGLCLLFIVRTLLLHPAIFGLH) traverse the membrane as a helical segment. Residues 147 to 195 (HIGMQMRIAMFSLIYKKTLKLSSRVLDKISIGQLVSLLSNNLNKFDEGL) are Cytoplasmic-facing. Residues 196-216 (ALAHFVWIVPLQVALLMGLIW) traverse the membrane as a helical segment. Residues 217–222 (ELLQAS) are Extracellular-facing. The chain crosses the membrane as a helical span at residues 223–243 (AFCGLGFLIVLALFQAGLGRM). The Cytoplasmic portion of the chain corresponds to 244 to 298 (MMKYRDQRAGKINERLVITSEMIENIQSVKAYCWEEAMEKMIENLRQTELKLTRK). Residues 299–319 (AAYVRYFNSSAFFFSGFFVVF) form a helical membrane-spanning segment. Residues 320–339 (LSVLPYALIKGIVLRKIFTT) lie on the Extracellular side of the membrane. A helical membrane pass occupies residues 340–358 (ISFCIVLRMAVTRQFPWAV). Over 359–858 (QTWYDSLGAI…YLRYITVHKS (500 aa)) the chain is Cytoplasmic. Residues Trp-401, Ser-434, 458–465 (GSTGAGKT), and Gln-493 each bind ATP. The ABC transporter 1 domain maps to 423–646 (NDDDSLFFSN…RPDFSSKLMG (224 aa)). Cys-524 carries S-palmitoyl cysteine lipidation. Ser-549 and Ser-660 each carry phosphoserine. Residues 654-831 (SAERRNSILT…EEINEEDLKE (178 aa)) are disordered R region. At Ser-670 the chain carries Phosphoserine; by PKA. Ser-686 bears the Phosphoserine mark. Lys-688 is covalently cross-linked (Glycyl lysine isopeptide (Lys-Gly) (interchain with G-Cter in ubiquitin)). Residues Ser-700 and Ser-712 each carry the phosphoserine modification. Residue Thr-717 is modified to Phosphothreonine. 6 positions are modified to phosphoserine: Ser-737, Ser-753, Ser-768, Ser-790, Ser-795, and Ser-813. A helical membrane pass occupies residues 859–879 (LIFVLIWCLVIFLAEVAASLV). In terms of domain architecture, ABC transmembrane type-1 2 spans 859 to 1155 (LIFVLIWCLV…AVNSSIDVDS (297 aa)). Residues 880-918 (VLWFLGNTPPQDKGNSTYSRNNSYAVIITRTSSYYVFYI) lie on the Extracellular side of the membrane. 2 N-linked (GlcNAc...) asparagine glycosylation sites follow: Asn-894 and Asn-900. The discontinuously helical transmembrane segment at 919-939 (YVGVADTLLAMGFFRGLPLVH) threads the bilayer. Topologically, residues 940 to 990 (TLITVSKILHHKMLHSVLQAPMSTLNTLKAGGILNRFSKDIAILDDLLPLT) are cytoplasmic. A helical membrane pass occupies residues 991 to 1011 (IFDFIQLLLIVIGAIAVVAVL). The Extracellular segment spans residues 1012-1013 (QP). A helical transmembrane segment spans residues 1014-1034 (YIFVATVPVIVAFIMLRAYFL). The Cytoplasmic portion of the chain corresponds to 1035–1095 (QTSQQLKQLE…TANWFLYLST (61 aa)). Residues 1096-1116 (LRWFQMRIEMIFVIFFIAVTF) traverse the membrane as a helical segment. The Extracellular segment spans residues 1117–1130 (ISILTTGEGEGTVG). A helical membrane pass occupies residues 1131–1151 (IILTLAMNIMSTLQWAVNSSI). At 1152-1481 (DVDSLMRSVS…TEEEVQDTRL (330 aa)) the chain is on the cytoplasmic side. The 234-residue stretch at 1211 to 1444 (MTVKDLTAKY…RSLFRQAISP (234 aa)) folds into the ABC transporter 2 domain. Residues Tyr-1220 and 1245 to 1252 (GRTGSGKS) contribute to the ATP site. The segment at 1387-1481 (RTLKQAFADC…TEEEVQDTRL (95 aa)) is interaction with GORASP2. The S-palmitoyl cysteine moiety is linked to residue Cys-1396. 2 positions are modified to phosphoserine: Ser-1445 and Ser-1457. Residues 1479–1481 (TRL) carry the PDZ-binding motif.

This sequence belongs to the ABC transporter superfamily. ABCC family. CFTR transporter (TC 3.A.1.202) subfamily. In terms of assembly, monomer; does not require oligomerization for channel activity. May form oligomers in the membrane. Interacts with SLC26A3, SLC26A6 and NHERF1. Interacts with SHANK2. Interacts with MYO6. Interacts (via C-terminus) with GOPC (via PDZ domain); this promotes CFTR internalization and thereby decreases channel activity. Interacts with SLC4A7 through NHERF1. Found in a complex with MYO5B and RAB11A. Interacts with ANO1. Interacts with SLC26A8. Interacts with AHCYL1; the interaction increases CFTR activity. Interacts with CSE1L. The core-glycosylated form interacts with GORASP2 (via PDZ GRASP-type 1 domain) in respone to ER stress. Interacts with MARCHF2; the interaction leads to CFTR ubiqtuitination and degradation. Interacts with ADGRG2. In terms of processing, N-glycosylated. Phosphorylated; cAMP treatment promotes phosphorylation and activates the channel. Dephosphorylation decreases the ATPase activity (in vitro). Phosphorylation at PKA sites activates the channel. Phosphorylation at PKC sites enhances the response to phosphorylation by PKA. Phosphorylated by AMPK; this inhibits channel activity. Post-translationally, ubiquitinated, leading to its degradation in the lysosome. Deubiquitination by USP10 in early endosomes enhances its endocytic recycling to the cell membrane. Ubiquitinated by RNF185 during ER stress. Ubiquitinated by MARCHF2.

It localises to the apical cell membrane. The protein localises to the early endosome membrane. Its subcellular location is the cell membrane. The protein resides in the recycling endosome membrane. It is found in the endoplasmic reticulum membrane. It localises to the nucleus. The enzyme catalyses ATP + H2O + closed Cl(-) channel = ADP + phosphate + open Cl(-) channel.. The catalysed reaction is chloride(in) = chloride(out). It catalyses the reaction hydrogencarbonate(in) = hydrogencarbonate(out). It carries out the reaction ATP + H2O = ADP + phosphate + H(+). Functionally, epithelial ion channel that plays an important role in the regulation of epithelial ion and water transport and fluid homeostasis. Mediates the transport of chloride ions across the cell membrane. Possesses an intrinsic ATPase activity and utilizes ATP to gate its channel; the passive flow of anions through the channel is gated by cycles of ATP binding and hydrolysis by the ATP-binding domains. The ion channel is also permeable to HCO(3)(-); selectivity depends on the extracellular chloride concentration. Exerts its function also by modulating the activity of other ion channels and transporters. Contributes to the regulation of the pH and the ion content of the epithelial fluid layer. Modulates the activity of the epithelial sodium channel (ENaC) complex, in part by regulating the cell surface expression of the ENaC complex. May regulate bicarbonate secretion and salvage in epithelial cells by regulating the transporter SLC4A7. Can inhibit the chloride channel activity of ANO1. Plays a role in the chloride and bicarbonate homeostasis during sperm epididymal maturation and capacitation. The polypeptide is Cystic fibrosis transmembrane conductance regulator (Macaca fascicularis (Crab-eating macaque)).